Reading from the N-terminus, the 562-residue chain is MAVRASEISRVYEAYPEKKATLYFLVLGFLALIVGSLFGPFQALNYGNVDAYPLLKRLLPFVQSYYQGLTLHGVLNAIVFTQLFAQAIMVYLPARELNMRPNMGLMWLSWWMAFIGLVVAALPLLANEATVLYTFYPPLKGHWAFYLGASVFVLSTWVSIYIVLDLWRRWKAANPGKVTPLVTYMAVVFWLMWFLASLGLVLEAVLFLLPWSFGLVEGVDPLVARTLFWWTGHPIVYFWLLPAYAIIYTILPKQAGGKLVSDPMARLAFLLFLLLSTPVGFHHQFADPGIDPTWKMIHSVLTLFVAVPSLMTAFTVAASLEFAGRLRGGRGLFGWIRALPWDNPAFVAPVLGLLGFIPGGAGGIVNASFTLDYVVHNTAWVPGHFHLQVASLVTLTAMGSLYWLLPNLTGKPISDAQRRLGLAVVWLWFLGMMIMAVGLHWAGLLNVPRRAYIAQVPDAYPHAAVPMVFNVLAGIVLLVALLLFIYGLFSVLLSRERKPELAEAPLPFAEVISGPEDRRLVLAMDRIGFWFAVAAILVVLAYGPTLVQLFGHLNPVPGWRLW.

A helical transmembrane segment spans residues 21–41; it reads TLYFLVLGFLALIVGSLFGPF. Residue His-72 participates in Fe(II)-heme a binding. The next 8 helical transmembrane spans lie at 74–94, 105–125, 144–164, 187–207, 227–247, 267–287, 300–320, and 345–365; these read VLNA…YLPA, LMWL…LPLL, AFYL…YIVL, VVFW…AVLF, LFWW…YAII, LAFL…QFAD, VLTL…AASL, and AFVA…GGIV. His-233, Tyr-237, His-282, and His-283 together coordinate Cu cation. The segment at residues 233-237 is a cross-link (1'-histidyl-3'-tyrosine (His-Tyr)); sequence HPIVY. Residue His-384 coordinates heme a3. The next 4 helical transmembrane spans lie at 385–405, 420–440, 471–491, and 527–547; these read FHLQ…YWLL, LGLA…VGLH, VLAG…LFSV, and IGFW…PTLV. His-386 lines the Fe(II)-heme a pocket.

This sequence belongs to the heme-copper respiratory oxidase family. It depends on heme as a cofactor. The cofactor is Cu cation.

Its subcellular location is the cell membrane. The catalysed reaction is 4 Fe(II)-[cytochrome c] + O2 + 8 H(+)(in) = 4 Fe(III)-[cytochrome c] + 2 H2O + 4 H(+)(out). It functions in the pathway energy metabolism; oxidative phosphorylation. The polypeptide is Cytochrome c oxidase subunit 1 (cbaA) (Thermus thermophilus (strain ATCC 27634 / DSM 579 / HB8)).